We begin with the raw amino-acid sequence, 436 residues long: Probable glucose-6-phosphate isomerase (436 aa).

The Proton donor role is filled by Glu272. Catalysis depends on residues His293 and Lys404.

The protein belongs to the GPI family.

It localises to the cytoplasm. It carries out the reaction alpha-D-glucose 6-phosphate = beta-D-fructose 6-phosphate. It participates in carbohydrate biosynthesis; gluconeogenesis. Its pathway is carbohydrate degradation; glycolysis; D-glyceraldehyde 3-phosphate and glycerone phosphate from D-glucose: step 2/4. Catalyzes the reversible isomerization of glucose-6-phosphate to fructose-6-phosphate. In Haloarcula marismortui (strain ATCC 43049 / DSM 3752 / JCM 8966 / VKM B-1809) (Halobacterium marismortui), this protein is Probable glucose-6-phosphate isomerase.